We begin with the raw amino-acid sequence, 352 residues long: Protein-glutamate methylesterase/protein-glutamine glutaminase 2 (352 aa).

The 116-residue stretch at 1–116 (MVVDDSAVVR…KQFLTDSADE (116 aa)) folds into the Response regulatory domain. Aspartate 50 is modified (4-aspartylphosphate). A CheB-type methylesterase domain is found at 162 to 352 (AQTTERIVAI…MAREIVTQLQ (191 aa)). Catalysis depends on residues serine 174, histidine 200, and aspartate 296.

This sequence belongs to the CheB family. In terms of processing, phosphorylated by CheA. Phosphorylation of the N-terminal regulatory domain activates the methylesterase activity.

It localises to the cytoplasm. The catalysed reaction is [protein]-L-glutamate 5-O-methyl ester + H2O = L-glutamyl-[protein] + methanol + H(+). It carries out the reaction L-glutaminyl-[protein] + H2O = L-glutamyl-[protein] + NH4(+). Involved in chemotaxis. Part of a chemotaxis signal transduction system that modulates chemotaxis in response to various stimuli. Catalyzes the demethylation of specific methylglutamate residues introduced into the chemoreceptors (methyl-accepting chemotaxis proteins or MCP) by CheR. Also mediates the irreversible deamidation of specific glutamine residues to glutamic acid. The chain is Protein-glutamate methylesterase/protein-glutamine glutaminase 2 from Xanthomonas euvesicatoria pv. vesicatoria (strain 85-10) (Xanthomonas campestris pv. vesicatoria).